The primary structure comprises 533 residues: D-3-phosphoglycerate dehydrogenase (533 aa).

Alanine 2 is modified (N-acetylalanine). Phosphoserine is present on serine 14. Lysine 21 carries the post-translational modification N6-acetyllysine; alternate. Residue lysine 21 forms a Glycyl lysine isopeptide (Lys-Gly) (interchain with G-Cter in SUMO1); alternate linkage. Lysine 21 participates in a covalent cross-link: Glycyl lysine isopeptide (Lys-Gly) (interchain with G-Cter in SUMO2); alternate. The residue at position 58 (lysine 58) is an N6-acetyllysine. NAD(+) is bound by residues threonine 78, 155–156 (RI), aspartate 175, threonine 207, 234–236 (CAR), and aspartate 260. Threonine 78 is subject to Phosphothreonine. The active site involves arginine 236. Glutamate 265 is a catalytic residue. The Proton donor role is filled by histidine 283. 283–286 (HLGA) is an NAD(+) binding site.

The protein belongs to the D-isomer specific 2-hydroxyacid dehydrogenase family. Homotetramer.

The catalysed reaction is (2R)-3-phosphoglycerate + NAD(+) = 3-phosphooxypyruvate + NADH + H(+). It carries out the reaction (R)-2-hydroxyglutarate + NAD(+) = 2-oxoglutarate + NADH + H(+). It catalyses the reaction (S)-malate + NAD(+) = oxaloacetate + NADH + H(+). It participates in amino-acid biosynthesis; L-serine biosynthesis; L-serine from 3-phospho-D-glycerate: step 1/3. Catalyzes the reversible oxidation of 3-phospho-D-glycerate to 3-phosphonooxypyruvate, the first step of the phosphorylated L-serine biosynthesis pathway. Also catalyzes the reversible oxidation of 2-hydroxyglutarate to 2-oxoglutarate and the reversible oxidation of (S)-malate to oxaloacetate. This Homo sapiens (Human) protein is D-3-phosphoglycerate dehydrogenase (PHGDH).